Here is a 266-residue protein sequence, read N- to C-terminus: Ribonuclease HII (266 aa).

The interval His19–Val38 is disordered. The RNase H type-2 domain maps to Trp58–Pro246. The a divalent metal cation site is built by Asp64, Glu65, and Asp155.

Belongs to the RNase HII family. Mn(2+) serves as cofactor. It depends on Mg(2+) as a cofactor.

Its subcellular location is the cytoplasm. It catalyses the reaction Endonucleolytic cleavage to 5'-phosphomonoester.. Its function is as follows. Endonuclease that specifically degrades the RNA of RNA-DNA hybrids. The chain is Ribonuclease HII from Rhodopseudomonas palustris (strain BisB18).